The following is a 74-amino-acid chain: Conotoxin AbVIL (74 aa).

An N-terminal signal peptide occupies residues 1 to 17 (VLIIAVLFLTACQLTTA). The disordered stretch occupies residues 17–41 (AETSSRGEQKHRAPRSTDKNSRMTK). The propeptide occupies 18-40 (ETSSRGEQKHRAPRSTDKNSRMT). Positions 21–37 (SRGEQKHRAPRSTDKNS) are enriched in basic and acidic residues. 3 disulfide bridges follow: Cys-43-Cys-57, Cys-50-Cys-61, and Cys-56-Cys-68.

Belongs to the conotoxin O1 superfamily. In terms of tissue distribution, expressed by the venom duct.

It is found in the secreted. The polypeptide is Conotoxin AbVIL (Conus abbreviatus (Abbreviated cone)).